A 266-amino-acid chain; its full sequence is Interleukin-1 beta (266 aa).

Residues 1–113 (MATVPEPTNE…ETYDDDLLCD (113 aa)) constitute a propeptide that is removed on maturation.

This sequence belongs to the IL-1 family. As to quaternary structure, monomer. In its precursor form, weakly interacts with full-length MEFV; the mature cytokine does not interact at all. Interacts with integrins ITGAV:ITGBV and ITGA5:ITGB1; integrin-binding is required for IL1B signaling. Interacts with cargo receptor TMED10; the interaction is direct and is required for the secretion of IL1B mature form. Interacts with HSP90AB1; the interaction facilitates cargo translocation into the ERGIC. Interacts with HSP90B1; the interaction facilitates cargo translocation into the ERGIC.

The protein localises to the cytoplasm. The protein resides in the cytosol. It is found in the secreted. It localises to the lysosome. Its subcellular location is the extracellular exosome. Its function is as follows. Potent pro-inflammatory cytokine. Initially discovered as the major endogenous pyrogen, induces prostaglandin synthesis, neutrophil influx and activation, T-cell activation and cytokine production, B-cell activation and antibody production, and fibroblast proliferation and collagen production. Promotes Th17 differentiation of T-cells. Synergizes with IL12/interleukin-12 to induce IFNG synthesis from T-helper 1 (Th1) cells. Plays a role in angiogenesis by inducing VEGF production synergistically with TNF and IL6. Involved in transduction of inflammation downstream of pyroptosis: its mature form is specifically released in the extracellular milieu by passing through the gasdermin-D (GSDMD) pore. This Delphinapterus leucas (Beluga whale) protein is Interleukin-1 beta (IL1B).